Here is a 316-residue protein sequence, read N- to C-terminus: Thymidylate synthase (316 aa).

Residues Arg-23 and 178–179 (RR) each bind dUMP. Cys-198 (nucleophile) is an active-site residue. DUMP contacts are provided by residues 218 to 221 (RSAD), Asn-229, and 259 to 261 (HIY). A (6R)-5,10-methylene-5,6,7,8-tetrahydrofolate-binding site is contributed by Asp-221. (6R)-5,10-methylene-5,6,7,8-tetrahydrofolate is bound at residue Ala-315.

Belongs to the thymidylate synthase family. Bacterial-type ThyA subfamily. As to quaternary structure, homodimer.

The protein localises to the cytoplasm. It catalyses the reaction dUMP + (6R)-5,10-methylene-5,6,7,8-tetrahydrofolate = 7,8-dihydrofolate + dTMP. Its pathway is pyrimidine metabolism; dTTP biosynthesis. In terms of biological role, catalyzes the reductive methylation of 2'-deoxyuridine-5'-monophosphate (dUMP) to 2'-deoxythymidine-5'-monophosphate (dTMP) while utilizing 5,10-methylenetetrahydrofolate (mTHF) as the methyl donor and reductant in the reaction, yielding dihydrofolate (DHF) as a by-product. This enzymatic reaction provides an intracellular de novo source of dTMP, an essential precursor for DNA biosynthesis. The protein is Thymidylate synthase of Levilactobacillus brevis (strain ATCC 367 / BCRC 12310 / CIP 105137 / JCM 1170 / LMG 11437 / NCIMB 947 / NCTC 947) (Lactobacillus brevis).